Consider the following 337-residue polypeptide: Ribosomal RNA small subunit methyltransferase H (337 aa).

Residues 45-47, Asp-64, His-91, Asp-112, and Gln-119 contribute to the S-adenosyl-L-methionine site; that span reads GGH.

It belongs to the methyltransferase superfamily. RsmH family.

Its subcellular location is the cytoplasm. It carries out the reaction cytidine(1402) in 16S rRNA + S-adenosyl-L-methionine = N(4)-methylcytidine(1402) in 16S rRNA + S-adenosyl-L-homocysteine + H(+). Functionally, specifically methylates the N4 position of cytidine in position 1402 (C1402) of 16S rRNA. This is Ribosomal RNA small subunit methyltransferase H from Cutibacterium acnes (strain DSM 16379 / KPA171202) (Propionibacterium acnes).